The chain runs to 209 residues: Methylated-DNA--protein-cysteine methyltransferase (209 aa).

Cys-5 lines the Zn(2+) pocket. Position 14 is a phosphoserine (Ser-14). Residues Cys-24 and His-29 each coordinate Zn(2+). Residues 35-57 (SGKTPSSDPKEAPASPELLGGPE) form a disordered region. His-89 serves as a coordination point for Zn(2+). DNA-binding residues include Thr-99, Tyr-118, Gln-119, Asn-127, and Arg-132. Residue Cys-149 is the Nucleophile; methyl group acceptor of the active site. Residue Ser-155 participates in DNA binding. Residue Ser-205 is modified to Phosphoserine.

The protein belongs to the MGMT family. Zn(2+) serves as cofactor.

It localises to the nucleus. The catalysed reaction is a 6-O-methyl-2'-deoxyguanosine in DNA + L-cysteinyl-[protein] = S-methyl-L-cysteinyl-[protein] + a 2'-deoxyguanosine in DNA. The enzyme catalyses a 4-O-methyl-thymidine in DNA + L-cysteinyl-[protein] = a thymidine in DNA + S-methyl-L-cysteinyl-[protein]. Its function is as follows. Involved in the cellular defense against the biological effects of O6-methylguanine (O6-MeG) and O4-methylthymine (O4-MeT) in DNA. Repairs the methylated nucleobase in DNA by stoichiometrically transferring the methyl group to a cysteine residue in the enzyme. This is a suicide reaction: the enzyme is irreversibly inactivated. This Cricetulus griseus (Chinese hamster) protein is Methylated-DNA--protein-cysteine methyltransferase (MGMT).